The primary structure comprises 57 residues: Large ribosomal subunit protein uL30 (57 aa).

The protein belongs to the universal ribosomal protein uL30 family. As to quaternary structure, part of the 50S ribosomal subunit.

This is Large ribosomal subunit protein uL30 from Acholeplasma laidlawii (strain PG-8A).